A 118-amino-acid polypeptide reads, in one-letter code: Thioredoxin AMT13 (118 aa).

The Thioredoxin domain occupies 1–110 (MSDNKAIQTL…LEDAIRANLG (110 aa)). C36 and C39 are disulfide-bonded.

This sequence belongs to the thioredoxin family.

Its pathway is mycotoxin biosynthesis. In terms of biological role, thioredoxin; part of the gene clusters that mediate the biosynthesis of AM-toxins, host-selective toxins (HSTs) causing Alternaria blotch on apple, a worldwide distributed disease. AM-toxins are cyclic depsipeptides containing the 3 residues 2-hydroxy-isovaleric acid (2-HIV), dehydroalanine, L-alanine which are common for all 3 AM-toxins I to III. The fourth precursor is L-alpha-amino-methoxyphenyl-valeric acid (L-Amv) for AM-toxin I, L-alpha-amino-phenyl-valeric acid (L-Apv) for AM-toxin II, and L-alpha-amino-hydroxyphenyl-valeric acid (L-Ahv) for AM-toxin III. AM-toxins have two target sites for affecting susceptible apple cells; they cause invagination of the plasma membrane and electrolyte loss and chloroplast disorganization. The non-ribosomal peptide synthetase AMT1 contains 4 catalytic modules and is responsible for activation of each residue in AM-toxin. The aldo-keto reductase AMT2 catalyzes the conversion of 2-keto-isovaleric acid (2-KIV) to 2-hydroxy-isovaleric acid (2-HIV), one of the precursor residues incorporated by AMT1 during AM-toxin biosynthesis, by reduction of its ketone to an alcohol. The cytochrome P450 monooxygenase AMT3 and the thioesterase AMT4 are also important for AM-toxin production, but their exact function within the AM-toxin biosynthesis are not known yet. Up to 21 proteins (including AMT1 to AMT4) are predicted to be involved in AM-toxin biosynthesis since their expression ishighly up-regulated in AM-toxin-producing cultures. This is Thioredoxin AMT13 from Alternaria alternata (Alternaria rot fungus).